The primary structure comprises 79 residues: Bacteriochlorophyll c-binding protein (79 aa).

Residue His25 participates in a bacteriochlorophyll c binding.

It belongs to the BChl C/E-binding protein family.

The protein resides in the chlorosome. It is found in the chlorosome envelope. Its function is as follows. Component of the photosynthetic apparatus. The light harvesting B740 complex binds bacteriochlorophyll c. The polypeptide is Bacteriochlorophyll c-binding protein (csmA) (Chlorobaculum tepidum (strain ATCC 49652 / DSM 12025 / NBRC 103806 / TLS) (Chlorobium tepidum)).